The following is an 838-amino-acid chain: Valine--tRNA ligase (838 aa).

Residues 46-56 (PNLTGTLHIGH) carry the 'HIGH' region motif. The short motif at 514–518 (KMSKS) is the 'KMSKS' region element. Lysine 517 contributes to the ATP binding site. The stretch at 768–838 (VDNAANNLAH…HLIAKLTKAE (71 aa)) forms a coiled coil.

Belongs to the class-I aminoacyl-tRNA synthetase family. ValS type 1 subfamily. In terms of assembly, monomer.

It localises to the cytoplasm. The catalysed reaction is tRNA(Val) + L-valine + ATP = L-valyl-tRNA(Val) + AMP + diphosphate. Its function is as follows. Catalyzes the attachment of valine to tRNA(Val). As ValRS can inadvertently accommodate and process structurally similar amino acids such as threonine, to avoid such errors, it has a 'posttransfer' editing activity that hydrolyzes mischarged Thr-tRNA(Val) in a tRNA-dependent manner. This Mycoplasma pneumoniae (strain ATCC 29342 / M129 / Subtype 1) (Mycoplasmoides pneumoniae) protein is Valine--tRNA ligase.